We begin with the raw amino-acid sequence, 109 residues long: MICFIFTYKDFIIKMSTFWQNLWLIYLFIVFYVLGMSFVVWLLLRSASIKNFIYTLVAGVAEAAAQATQTELNYHACKRYTKACNDADIPVNPHKIEELTTPRGGTGRN.

It is found in the mitochondrion. This is an uncharacterized protein from Marchantia polymorpha (Common liverwort).